A 294-amino-acid polypeptide reads, in one-letter code: ATP synthase gamma chain (294 aa).

Belongs to the ATPase gamma chain family. In terms of assembly, F-type ATPases have 2 components, CF(1) - the catalytic core - and CF(0) - the membrane proton channel. CF(1) has five subunits: alpha(3), beta(3), gamma(1), delta(1), epsilon(1). CF(0) has three main subunits: a, b and c.

It is found in the cell inner membrane. Its function is as follows. Produces ATP from ADP in the presence of a proton gradient across the membrane. The gamma chain is believed to be important in regulating ATPase activity and the flow of protons through the CF(0) complex. This is ATP synthase gamma chain from Rhizobium rhizogenes (strain K84 / ATCC BAA-868) (Agrobacterium radiobacter).